The following is a 141-amino-acid chain: Large ribosomal subunit protein uL14 (141 aa).

Belongs to the universal ribosomal protein uL14 family. In terms of assembly, part of the 50S ribosomal subunit. Forms a cluster with proteins L3 and L24e, part of which may contact the 16S rRNA in 2 intersubunit bridges.

In terms of biological role, binds to 23S rRNA. Forms part of two intersubunit bridges in the 70S ribosome. In Pyrococcus furiosus (strain ATCC 43587 / DSM 3638 / JCM 8422 / Vc1), this protein is Large ribosomal subunit protein uL14.